A 98-amino-acid polypeptide reads, in one-letter code: Protein S100-A13 (98 aa).

Residues 18–53 (STFFTFAGREGRKGSLNINEFKELATQQLPHLLKDV) enclose the EF-hand domain. Residues serine 32, glutamate 37, aspartate 64, asparagine 66, aspartate 68, glutamate 70, and glutamate 75 each coordinate Ca(2+). At serine 32 the chain carries Phosphoserine.

This sequence belongs to the S-100 family. As to quaternary structure, homodimer. Part of a copper-dependent multiprotein complex containing S100A13, FGF1 and SYT1. Interacts with FGF1 and SYT1. Interacts with IL1A.

The protein localises to the cytoplasm. Its subcellular location is the secreted. Functionally, plays a role in the export of proteins that lack a signal peptide and are secreted by an alternative pathway. Binds two calcium ions per subunit. Binds one copper ion. Binding of one copper ion does not interfere with calcium binding. Required for the copper-dependent stress-induced export of IL1A and FGF1. The calcium-free protein binds to lipid vesicles containing phosphatidylserine, but not to vesicles containing phosphatidylcholine. The protein is Protein S100-A13 (S100a13) of Mus musculus (Mouse).